The chain runs to 576 residues: Proline--tRNA ligase (576 aa).

The protein belongs to the class-II aminoacyl-tRNA synthetase family. ProS type 1 subfamily. As to quaternary structure, homodimer.

It localises to the cytoplasm. It catalyses the reaction tRNA(Pro) + L-proline + ATP = L-prolyl-tRNA(Pro) + AMP + diphosphate. Functionally, catalyzes the attachment of proline to tRNA(Pro) in a two-step reaction: proline is first activated by ATP to form Pro-AMP and then transferred to the acceptor end of tRNA(Pro). As ProRS can inadvertently accommodate and process non-cognate amino acids such as alanine and cysteine, to avoid such errors it has two additional distinct editing activities against alanine. One activity is designated as 'pretransfer' editing and involves the tRNA(Pro)-independent hydrolysis of activated Ala-AMP. The other activity is designated 'posttransfer' editing and involves deacylation of mischarged Ala-tRNA(Pro). The misacylated Cys-tRNA(Pro) is not edited by ProRS. The polypeptide is Proline--tRNA ligase (Helicobacter pylori (strain J99 / ATCC 700824) (Campylobacter pylori J99)).